We begin with the raw amino-acid sequence, 349 residues long: Flavonol synthase/flavanone 3-hydroxylase (349 aa).

The 98-residue stretch at 213–310 folds into the Fe2OG dioxygenase domain; it reads DIVYMLKINY…RMSWPVFLEP (98 aa). The Fe cation site is built by H238, D240, and H291.

This sequence belongs to the iron/ascorbate-dependent oxidoreductase family. Fe cation serves as cofactor. L-ascorbate is required as a cofactor.

Its subcellular location is the cytoplasm. It carries out the reaction a (2R,3R)-dihydroflavonol + 2-oxoglutarate + O2 = a flavonol + succinate + CO2 + H2O. It catalyses the reaction a (2S)-flavan-4-one + 2-oxoglutarate + O2 = a (2R,3R)-dihydroflavonol + succinate + CO2. It participates in secondary metabolite biosynthesis; flavonoid biosynthesis. Its function is as follows. Catalyzes the formation of flavonols from dihydroflavonols. It can act on dihydrokaempferol to produce kaempferol, on dihydroquercetin to produce quercitin and on dihydromyricetin to produce myricetin. This Solanum tuberosum (Potato) protein is Flavonol synthase/flavanone 3-hydroxylase.